The primary structure comprises 244 residues: Carbonic anhydrase (244 aa).

The signal sequence occupies residues 1 to 19 (MKGKFSIALMLSACFSASA). Positions 23 to 244 (VHWGYEGSGD…QPLNGRIIIH (222 aa)) constitute an Alpha-carbonic anhydrase domain. The cysteines at positions 46 and 199 are disulfide-linked. The active-site Proton acceptor is histidine 84. Zn(2+) contacts are provided by histidine 109, histidine 111, and histidine 128. 195–196 (TT) provides a ligand contact to substrate.

Belongs to the alpha-carbonic anhydrase family. Zn(2+) is required as a cofactor.

The protein resides in the periplasm. The catalysed reaction is hydrogencarbonate + H(+) = CO2 + H2O. Reversible hydration of carbon dioxide. The sequence is that of Carbonic anhydrase (cah) from Pectobacterium atrosepticum (strain SCRI 1043 / ATCC BAA-672) (Erwinia carotovora subsp. atroseptica).